Consider the following 117-residue polypeptide: Large ribosomal subunit protein uL18 (117 aa).

It belongs to the universal ribosomal protein uL18 family. Part of the 50S ribosomal subunit; part of the 5S rRNA/L5/L18/L25 subcomplex. Contacts the 5S and 23S rRNAs.

In terms of biological role, this is one of the proteins that bind and probably mediate the attachment of the 5S RNA into the large ribosomal subunit, where it forms part of the central protuberance. The chain is Large ribosomal subunit protein uL18 from Francisella philomiragia subsp. philomiragia (strain ATCC 25017 / CCUG 19701 / FSC 153 / O#319-036).